The chain runs to 638 residues: Chaperone protein DnaK (638 aa).

T200 carries the post-translational modification Phosphothreonine; by autocatalysis. The disordered stretch occupies residues 599-623; the sequence is LHMAATAEQQSASTGAGAGSSAKVD. Residues 609 to 620 are compositionally biased toward low complexity; the sequence is SASTGAGAGSSA.

Belongs to the heat shock protein 70 family.

Acts as a chaperone. In Xylella fastidiosa (strain M12), this protein is Chaperone protein DnaK.